A 348-amino-acid polypeptide reads, in one-letter code: Uroporphyrinogen decarboxylase (348 aa).

Substrate-binding positions include 27–31 (RQAGR), phenylalanine 46, aspartate 76, tyrosine 152, serine 207, and histidine 320.

It belongs to the uroporphyrinogen decarboxylase family. As to quaternary structure, homodimer.

It localises to the cytoplasm. The enzyme catalyses uroporphyrinogen III + 4 H(+) = coproporphyrinogen III + 4 CO2. It functions in the pathway porphyrin-containing compound metabolism; protoporphyrin-IX biosynthesis; coproporphyrinogen-III from 5-aminolevulinate: step 4/4. Its function is as follows. Catalyzes the decarboxylation of four acetate groups of uroporphyrinogen-III to yield coproporphyrinogen-III. In Bacillus mycoides (strain KBAB4) (Bacillus weihenstephanensis), this protein is Uroporphyrinogen decarboxylase.